Consider the following 317-residue polypeptide: Pantothenate kinase (317 aa).

99-106 (GSVSVGKS) serves as a coordination point for ATP.

This sequence belongs to the prokaryotic pantothenate kinase family.

Its subcellular location is the cytoplasm. It catalyses the reaction (R)-pantothenate + ATP = (R)-4'-phosphopantothenate + ADP + H(+). The protein operates within cofactor biosynthesis; coenzyme A biosynthesis; CoA from (R)-pantothenate: step 1/5. In Mannheimia succiniciproducens (strain KCTC 0769BP / MBEL55E), this protein is Pantothenate kinase.